A 127-amino-acid chain; its full sequence is Fluoride-specific ion channel FluC 1 (127 aa).

Transmembrane regions (helical) follow at residues 4–24 (TLLA…LVSL), 35–55 (VGTL…LAFF), 71–91 (TGFC…VYLI), and 101–121 (GTIL…FILV). Residues Gly75 and Thr78 each contribute to the Na(+) site.

It belongs to the fluoride channel Fluc/FEX (TC 1.A.43) family.

It is found in the cell inner membrane. It catalyses the reaction fluoride(in) = fluoride(out). Its activity is regulated as follows. Na(+) is not transported, but it plays an essential structural role and its presence is essential for fluoride channel function. Its function is as follows. Fluoride-specific ion channel. Important for reducing fluoride concentration in the cell, thus reducing its toxicity. This Yersinia pestis protein is Fluoride-specific ion channel FluC 1.